Consider the following 273-residue polypeptide: Bidirectional sugar transporter SWEET1a (273 aa).

Over 1-6 (MEHIAR) the chain is Extracellular. A helical transmembrane segment spans residues 7–27 (FFFGVSGNVIALFLFLSPVVT). The region spanning 7–95 (FFFGVSGNVI…VIFLIFAERK (89 aa)) is the MtN3/slv 1 domain. The Cytoplasmic segment spans residues 28 to 42 (FWRIIKKRSTEDFSG). A helical transmembrane segment spans residues 43 to 63 (VPYNMTLLNCLLSAWYGLPFV). The Extracellular portion of the chain corresponds to 64–71 (SPNNILVT). Residues 72–92 (TINGTGSVIEAIYVVIFLIFA) form a helical membrane-spanning segment. Residues 93–101 (ERKARLKMM) are Cytoplasmic-facing. A helical transmembrane segment spans residues 102-122 (GLLGLVTSIFTMVVLVSLLAL). Over 123–128 (HGQGRK) the chain is Extracellular. The helical transmembrane segment at 129–149 (LFCGLAATIFSICMYASPLSI) threads the bilayer. The region spanning 131-214 (CGLAATIFSI…ILYAIYRNHK (84 aa)) is the MtN3/slv 2 domain. Residues 150–163 (MRLVIKTKSVEFMP) lie on the Cytoplasmic side of the membrane. A helical transmembrane segment spans residues 164–184 (FLLSLSVFLCGTSWFIYGLLG). The Extracellular portion of the chain corresponds to 185–188 (RDPF). A helical membrane pass occupies residues 189–209 (IAIPNGCGSFLGLMQLILYAI). Residues 210–273 (YRNHKGATPA…SADDKVASQV (64 aa)) are Cytoplasmic-facing.

It belongs to the SWEET sugar transporter family. As to quaternary structure, forms homooligomers and/or heterooligomers.

Its subcellular location is the cell membrane. In terms of biological role, mediates both low-affinity uptake and efflux of sugar across the plasma membrane. In Oryza sativa subsp. japonica (Rice), this protein is Bidirectional sugar transporter SWEET1a (SWEET1A).